A 133-amino-acid polypeptide reads, in one-letter code: Large ribosomal subunit protein uL16c (133 aa).

It belongs to the universal ribosomal protein uL16 family. In terms of assembly, part of the 50S ribosomal subunit.

It localises to the plastid. The protein resides in the chloroplast. This chain is Large ribosomal subunit protein uL16c, found in Liriodendron tulipifera (Tuliptree).